The sequence spans 410 residues: tRNA-guanine(15) transglycosylase (410 aa).

Asp-87 serves as the catalytic Nucleophile. Substrate contacts are provided by Asp-122 and Gly-187.

Belongs to the archaeosine tRNA-ribosyltransferase family. Zn(2+) is required as a cofactor.

The catalysed reaction is guanosine(15) in tRNA + 7-cyano-7-deazaguanine = 7-cyano-7-carbaguanosine(15) in tRNA + guanine. It functions in the pathway tRNA modification; archaeosine-tRNA biosynthesis. Functionally, exchanges the guanine residue with 7-cyano-7-deazaguanine (preQ0) at position 15 in the dihydrouridine loop (D-loop) of archaeal tRNAs. This Nanoarchaeum equitans (strain Kin4-M) protein is tRNA-guanine(15) transglycosylase.